The sequence spans 469 residues: Arginine biosynthesis bifunctional protein ArgJ, mitochondrial (469 aa).

The substrate site is built by threonine 199, lysine 228, threonine 239, glutamate 325, asparagine 464, and threonine 469. The active-site Nucleophile is the threonine 239.

The protein belongs to the ArgJ family. Heterodimer of an alpha and a beta chain. In terms of processing, the alpha and beta chains are autoproteolytically processed from a single precursor protein within the mitochondrion.

The protein localises to the mitochondrion matrix. It catalyses the reaction N(2)-acetyl-L-ornithine + L-glutamate = N-acetyl-L-glutamate + L-ornithine. The catalysed reaction is L-glutamate + acetyl-CoA = N-acetyl-L-glutamate + CoA + H(+). It functions in the pathway amino-acid biosynthesis; L-arginine biosynthesis; L-ornithine and N-acetyl-L-glutamate from L-glutamate and N(2)-acetyl-L-ornithine (cyclic): step 1/1. The protein operates within amino-acid biosynthesis; L-arginine biosynthesis; N(2)-acetyl-L-ornithine from L-glutamate: step 1/4. Catalyzes two activities which are involved in the cyclic version of arginine biosynthesis: the synthesis of acetylglutamate from glutamate and acetyl-CoA, and of ornithine by transacetylation between acetylornithine and glutamate. The chain is Arginine biosynthesis bifunctional protein ArgJ, mitochondrial from Sordaria macrospora (strain ATCC MYA-333 / DSM 997 / K(L3346) / K-hell).